The chain runs to 528 residues: Calcium-dependent protein kinase 13 (528 aa).

A lipid anchor (N-myristoyl glycine) is attached at Gly2. The span at 17–32 shows a compositional bias: basic and acidic residues; the sequence is KSNYSGHDHARKDAAG. A disordered region spans residues 17–37; the sequence is KSNYSGHDHARKDAAGGKKSA. Residue Ser43 is modified to Phosphoserine. In terms of domain architecture, Protein kinase spans 54–312; sequence YLLDRELGRG…AKQVLEHPWI (259 aa). Residues 60-68 and Lys83 contribute to the ATP site; that span reads LGRGEFGVT. Catalysis depends on Asp178, which acts as the Proton acceptor. The residue at position 218 (Ser218) is a Phosphoserine. Positions 318–348 are autoinhibitory domain; the sequence is APNVPLGDVVKSRLKQFSVMNRFKRKALRVI. EF-hand domains are found at residues 355 to 390, 391 to 426, 427 to 462, and 463 to 498; these read EEVEDIKVMFNKMDTDNDGIVSIEELKAGLRDFSTQ, LAESEVQMLIEAVDTKGKGTLDYGEFVAVSLHLQKV, ANDEHLRKAFSYFDKDGNGYILPQELCDALKEDGGD, and DCVDVANDIFQEVDTDKDGRISYEEFAAMMKTGTDW. 16 residues coordinate Ca(2+): Asp368, Asp370, Asp372, Glu379, Asp404, Thr410, Glu415, Asp440, Asp442, Asn444, Tyr446, Glu451, Asp476, Asp478, Asp480, and Arg482. Ser484 carries the post-translational modification Phosphoserine. Glu487 contacts Ca(2+). Ser522 is subject to Phosphoserine.

The protein belongs to the protein kinase superfamily. Ser/Thr protein kinase family. CDPK subfamily.

It localises to the cell membrane. It catalyses the reaction L-seryl-[protein] + ATP = O-phospho-L-seryl-[protein] + ADP + H(+). It carries out the reaction L-threonyl-[protein] + ATP = O-phospho-L-threonyl-[protein] + ADP + H(+). Its activity is regulated as follows. Activated by calcium. Autophosphorylation may play an important role in the regulation of the kinase activity. May play a role in signal transduction pathways that involve calcium as a second messenger. The sequence is that of Calcium-dependent protein kinase 13 (CPK13) from Arabidopsis thaliana (Mouse-ear cress).